We begin with the raw amino-acid sequence, 57 residues long: Large ribosomal subunit protein bL32 (57 aa).

The protein belongs to the bacterial ribosomal protein bL32 family.

The protein is Large ribosomal subunit protein bL32 of Staphylococcus saprophyticus subsp. saprophyticus (strain ATCC 15305 / DSM 20229 / NCIMB 8711 / NCTC 7292 / S-41).